The following is a 348-amino-acid chain: Dihydroorotase (348 aa).

Positions 17 and 19 each coordinate Zn(2+). Residues 19 to 21 and asparagine 45 contribute to the substrate site; that span reads HLR. Zn(2+) is bound by residues lysine 103, histidine 140, and histidine 178. Lysine 103 is subject to N6-carboxylysine. Residue histidine 140 participates in substrate binding. A substrate-binding site is contributed by leucine 223. Residue aspartate 251 participates in Zn(2+) binding. Aspartate 251 is a catalytic residue. Residues histidine 255 and alanine 267 each coordinate substrate.

It belongs to the metallo-dependent hydrolases superfamily. DHOase family. Class II DHOase subfamily. As to quaternary structure, homodimer. Zn(2+) is required as a cofactor.

The enzyme catalyses (S)-dihydroorotate + H2O = N-carbamoyl-L-aspartate + H(+). Its pathway is pyrimidine metabolism; UMP biosynthesis via de novo pathway; (S)-dihydroorotate from bicarbonate: step 3/3. Its function is as follows. Catalyzes the reversible cyclization of carbamoyl aspartate to dihydroorotate. This is Dihydroorotase from Cronobacter sakazakii (strain ATCC BAA-894) (Enterobacter sakazakii).